The chain runs to 361 residues: tRNA/tmRNA (uracil-C(5))-methyltransferase (361 aa).

Residues Gln-185, Tyr-213, Asn-218, Glu-234, and Asp-294 each coordinate S-adenosyl-L-methionine. Cys-319 functions as the Nucleophile in the catalytic mechanism. Glu-353 acts as the Proton acceptor in catalysis.

This sequence belongs to the class I-like SAM-binding methyltransferase superfamily. RNA M5U methyltransferase family. TrmA subfamily.

The enzyme catalyses uridine(54) in tRNA + S-adenosyl-L-methionine = 5-methyluridine(54) in tRNA + S-adenosyl-L-homocysteine + H(+). It carries out the reaction uridine(341) in tmRNA + S-adenosyl-L-methionine = 5-methyluridine(341) in tmRNA + S-adenosyl-L-homocysteine + H(+). Its function is as follows. Dual-specificity methyltransferase that catalyzes the formation of 5-methyluridine at position 54 (m5U54) in all tRNAs, and that of position 341 (m5U341) in tmRNA (transfer-mRNA). The protein is tRNA/tmRNA (uracil-C(5))-methyltransferase of Pseudomonas putida (strain W619).